Consider the following 342-residue polypeptide: Phomopsin biosynthesis cluster protein B (342 aa).

The tract at residues 1 to 22 (MESIAKAKSLPNKGRTYDSQRP) is disordered. A helical transmembrane segment spans residues 87–107 (VLIIGCAVISLFAIIGALGFA). The disordered stretch occupies residues 118–186 (CASPAHQNPH…QCGESPDEAQ (69 aa)). Low complexity predominate over residues 144–155 (HSGSHSSSSSTN). A glycan (N-linked (GlcNAc...) asparagine) is linked at Asn248.

The protein localises to the membrane. In terms of biological role, part of the gene cluster that mediates the biosynthesis of the phomopsins, a group of hexapeptide mycotoxins which infects lupins and causes lupinosis disease in livestock. The role of phomB within the phomopsins biosynthesis pathway has still to be determined. The pathway starts with the processing of the precursor phomA by several endopeptidases including kexin proteases as well as the cluster-specific S41 family peptidase phomP1 and the oligopeptidase phomG to produce 10 identical copies of the hexapeptide Tyr-Val-Ile-Pro-Ile-Asp. After being excised from the precursor peptide, the core peptides are cyclized and modified post-translationally by enzymes encoded within the gene cluster. The timing and order of proteolysis of the phomA precursor and PTMs are still unknown. Two tyrosinase-like enzymes, phomQ1 and phomQ2, catalyze the chlorination and hydroxylation of Tyr, respectively. PhomYb, is proposed to be involved in the construction of the macrocyclic structure. The other 4 ustYa family proteins may be involved in PTMs that generate the unique structure of phomopsin A. PhomYa is required for the hydroxylation of C-beta of Tyr. PhomYc, phomYd, and phomYe are responsible for the biosynthesis of 2,3-dehydroisoleucine (dIle), 2,3-dehydroaspartic acid (dAsp), and 3,4-dehydroproline (dPro), respectively. While dIle formation by phomYc is indispensable for the installation of dAsp by phomYd, the order of the other PTMs have not been elucidated yet. Most of the biosynthetic enzymes likely have broad substrate specificity, and thus, there might be a metabolic grid from a precursor to phomopsin A. The enzyme(s) responsible for the biosynthesis of 3,4-dehydrovaline (dVal) have also not been identified yet. Finally, phomM acts as an S-adenosylmethionine-dependent alpha-N-methyltransferase that catalyzes two successive N-methylation reactions, converting N-desmethyl-phomopsin A to phomopsin A and phomopsin A further to an N,N-dimethylated congener called phomopsin E. The chain is Phomopsin biosynthesis cluster protein B from Diaporthe leptostromiformis (Lupinosis disease fungus).